The following is a 640-amino-acid chain: uncharacterized protein (640 aa).

Helical transmembrane passes span 8 to 28, 52 to 72, 90 to 110, 136 to 156, 179 to 199, 208 to 228, 241 to 261, 277 to 297, 298 to 318, 352 to 372, 391 to 411, 446 to 466, 497 to 517, and 619 to 639; these read GGVV…LGMF, LGGF…CYLI, LFVA…FLLA, LWYA…LVVL, VFML…LHAW, PSPV…YGIV, WWGL…VLQA, ENMG…DTGA, YGPA…HAAF, TVFF…AGFV, IVAL…GLSV, AIAA…APMV, IAPG…AVLA, and GSVH…LVVA.

This sequence belongs to the complex I subunit 4 family.

It is found in the cell membrane. This is an uncharacterized protein from Mycobacterium tuberculosis (strain CDC 1551 / Oshkosh).